The primary structure comprises 108 residues: UPF0060 membrane protein BLi00854/BL03049 (108 aa).

Transmembrane regions (helical) follow at residues 3–23, 31–51, 60–80, and 86–106; these read IAIGLFLLAGLAEIAGGYLVW, PLWYGLAGGLTLIIYGVIPAF, VYAAYGGVFIILAVLWGWLVD, and LYDWAGAVICLAGVSVMLWAP.

It belongs to the UPF0060 family.

It localises to the cell membrane. This chain is UPF0060 membrane protein BLi00854/BL03049, found in Bacillus licheniformis (strain ATCC 14580 / DSM 13 / JCM 2505 / CCUG 7422 / NBRC 12200 / NCIMB 9375 / NCTC 10341 / NRRL NRS-1264 / Gibson 46).